Consider the following 445-residue polypeptide: MKPVIALVGRPNVGKSTLFNRLTRSRDALVADLPGLTRDRHYGEGRVGERPYLVVDTGGFEPVAKDGILHEMARQTRQAVEEADVVVFIVDGRNGLAPQDKSIADYLRKTGRPIFLVVNKAEGMKYTAVATDFYELGLGDPRAISAAHGDGVTDMINEALEVAYAGQPEEAEEDDPSRGIKIAIVGRPNVGKSTLVNALIGEDRVIAFDMPGTTRDSIYVDFERNGKKYTLIDTAGLRRRGKVFEAIEKFSVVKTLQSISDANVVILLLDAQQDISDQDAHIAGFVVEQGRALVIGVNKWDGFDDHARDRAKADLTRKLKFLDFAKSHFISAAKKTGIGALMRSVDDAYAAAMSKLPTPKLTRALIEAVEFQQPRRRGPVRPKLRYAHQGGQNPPIIVIHGNALDAVTETYKRYLENRFRETFSLTGTPLRIEFRSSNNPYADKG.

EngA-type G domains lie at 3–167 and 180–353; these read PVIA…YAGQ and IKIA…AAAM. Residues 9–16, 56–60, 119–122, 186–193, 233–237, and 298–301 contribute to the GTP site; these read GRPNVGKS, DTGGF, NKAE, DTAGL, and NKWD. A KH-like domain is found at 354–438; the sequence is SKLPTPKLTR…PLRIEFRSSN (85 aa).

It belongs to the TRAFAC class TrmE-Era-EngA-EngB-Septin-like GTPase superfamily. EngA (Der) GTPase family. As to quaternary structure, associates with the 50S ribosomal subunit.

Its function is as follows. GTPase that plays an essential role in the late steps of ribosome biogenesis. This is GTPase Der from Burkholderia cenocepacia (strain ATCC BAA-245 / DSM 16553 / LMG 16656 / NCTC 13227 / J2315 / CF5610) (Burkholderia cepacia (strain J2315)).